The primary structure comprises 832 residues: Ventricular zone-expressed PH domain-containing protein homolog 1 (832 aa).

The interaction with TGFBR1 stretch occupies residues 201–319 (AELLALMSQL…RYLVSQLANM (119 aa)). The segment at 497-519 (DTHGSQLRNSSASHPSIIHSEPE) is disordered. A compositionally biased stretch (polar residues) spans 499–510 (HGSQLRNSSASH). The interval 663–832 (ESTFPQQKDL…RESREVTTYL (170 aa)) is interaction with TGFBR1. A PH domain is found at 716 to 818 (QPLIEGKLKE…WLQCINVALA (103 aa)).

This sequence belongs to the MELT/VEPH family. In terms of assembly, interacts with TGFBR1.

The protein localises to the cell membrane. In terms of biological role, interacts with TGF-beta receptor type-1 (TGFBR1) and inhibits dissociation of activated SMAD2 from TGFBR1, impeding its nuclear accumulation and resulting in impaired TGF-beta signaling. May also affect FOXO, Hippo and Wnt signaling. The chain is Ventricular zone-expressed PH domain-containing protein homolog 1 (Veph1) from Rattus norvegicus (Rat).